Reading from the N-terminus, the 131-residue chain is Small ribosomal subunit protein eS8 (131 aa).

The tract at residues 1–42 is disordered; it reads MKLGAYYKGGDLKKPSGGKKRKVRKTKKKALGGGPPQIPKLG. Over residues 16–30 the composition is skewed to basic residues; the sequence is SGGKKRKVRKTKKKA.

This sequence belongs to the eukaryotic ribosomal protein eS8 family. In terms of assembly, part of the 30S ribosomal subunit.

This chain is Small ribosomal subunit protein eS8, found in Pyrobaculum aerophilum (strain ATCC 51768 / DSM 7523 / JCM 9630 / CIP 104966 / NBRC 100827 / IM2).